The following is a 194-amino-acid chain: GTP cyclohydrolase 1 (194 aa).

Residues C83, H86, and C155 each contribute to the Zn(2+) site.

Belongs to the GTP cyclohydrolase I family. As to quaternary structure, toroid-shaped homodecamer, composed of two pentamers of five dimers.

It carries out the reaction GTP + H2O = 7,8-dihydroneopterin 3'-triphosphate + formate + H(+). It participates in cofactor biosynthesis; 7,8-dihydroneopterin triphosphate biosynthesis; 7,8-dihydroneopterin triphosphate from GTP: step 1/1. In Streptococcus pyogenes serotype M1, this protein is GTP cyclohydrolase 1 (folE).